A 182-amino-acid chain; its full sequence is Dirigent protein 1 (182 aa).

The N-terminal stretch at 1-24 (MAKRFLLLLPLLSSILLLAVSVTA) is a signal peptide. N-linked (GlcNAc...) asparagine glycosylation is present at Asn-125.

This sequence belongs to the plant dirigent protein family. As to quaternary structure, homodimer.

The protein resides in the secreted. It localises to the extracellular space. It is found in the apoplast. In terms of biological role, dirigent proteins impart stereoselectivity on the phenoxy radical-coupling reaction, yielding optically active lignans from two molecules of coniferyl alcohol in the biosynthesis of lignans, flavonolignans, and alkaloids and thus plays a central role in plant secondary metabolism. The sequence is that of Dirigent protein 1 (DIR1) from Arabidopsis thaliana (Mouse-ear cress).